Reading from the N-terminus, the 8797-residue chain is Nesprin-1 (8797 aa).

Residues 1-289 (MATSRGASRC…KHYPDIHNAS (289 aa)) are actin-binding. The Cytoplasmic segment spans residues 1 to 8746 (MATSRGASRC…GRGFLFRVLR (8746 aa)). Calponin-homology (CH) domains are found at residues 27–134 (IVQK…LYFQ) and 178–283 (GNAK…KHYP). Spectrin repeat units lie at residues 314 to 397 (REDR…SRLF), 398 to 502 (DWHI…HLMK), 503 to 609 (MEFL…SMLE), 610 to 703 (EVIS…YAQA), 704 to 815 (DEMD…QLLI), 816 to 923 (PLEE…KHVE), 924 to 1024 (TNSR…HLKI), 1025 to 1122 (DVEK…LMED), 1123 to 1246 (PDKW…NSLE), 1247 to 1335 (ELIS…ERRI), 1336 to 1444 (QVTL…MEMV), 1445 to 1550 (KTKW…ILGH), 1551 to 1653 (LSQQ…LENL), 1654 to 1763 (LAHW…LQSV), 1764 to 1879 (VAEH…SHAS), 1880 to 1976 (LSGI…ADAL), 1977 to 2081 (AVLK…QGQC), 2082 to 2195 (CGLI…LRVS), 2196 to 2303 (LSIW…KDFT), 2304 to 2401 (AQST…KTQA), 2402 to 2513 (SLQE…LQDC), 2514 to 2619 (ASEL…LRSC), 2620 to 2731 (QVAL…LESV), 2732 to 2838 (ISQW…VEEI), 2839 to 2962 (VKDH…SGQV), 2963 to 3062 (AQLE…QNKE), 3063 to 3171 (QILQ…LENL), 3172 to 3275 (KIQM…VSRL), 3276 to 3387 (DRIV…LEGA), 3388 to 3490 (LSKW…SEKL), 3491 to 3593 (VRLH…RTQF), 3594 to 3720 (NNVV…YSDW), 3721 to 3814 (YGST…LEKG), 3815 to 3920 (LHLA…LEAK), 3921 to 4028 (VKDH…QRMY), 4029 to 4139 (QSLE…KHLK), 4140 to 4235 (SELW…REED), 4236 to 4339 (LQRT…IQVS), 4340 to 4451 (VTNL…LNKA), 4452 to 4560 (LSEK…LEKN), 4561 to 4669 (LVSR…VQEA), 4670 to 4776 (ILAR…LEDT), 4777 to 4882 (TSAY…CESR), 4883 to 4991 (MVQS…LTEI), 4992 to 5099 (YSQC…LQRC), 5100 to 5209 (TAQW…LEDA), 5210 to 5318 (VDEW…GKLV), 5319 to 5424 (KQEL…EQSK), 5425 to 5522 (ATSQ…LSKL), 5523 to 5630 (NQAA…LQDA), 5631 to 5736 (AKDM…MQEA), and 5737 to 5842 (VVQY…PSAH). The stretch at 314–8666 (REDRVIFKEM…EKLLDVSSSQ (8353 aa)) forms a coiled coil. S732 is subject to Phosphoserine. Position 2270 is a phosphothreonine (T2270). Position 5657 is a phosphoserine (S5657). Residues 5859–5886 (PVTEESGEEGTNSEISSPPACRSPSPVA) form a disordered region. Spectrin repeat units lie at residues 5962–6071 (LERQ…LEEK), 6072–6178 (LNDQ…SLLE), 6374–6485 (RQSI…RLQQ), 6486–6581 (ILNF…RSGL), 6582–6691 (NQNL…LETW), 6692–6795 (SHLD…TILK), 6796–6902 (HWTR…QEKL), 6903–7020 (HQLQ…LEGL), 7021–7128 (LESW…LKSV), 7129–7237 (LDQW…SKAL), 7238–7350 (LQLW…LQAG), 7351–7454 (VLDY…LQSF), 7455–7558 (LLQH…RGII), 7559–7671 (DSQI…LAFL), 7672–7783 (LKDW…NEWA), 7784–7883 (VFSE…LKET), 7884–7997 (LVAV…IEET), 7998–8106 (WRLW…LKHF), and 8107–8216 (IGQR…LPLP). The residue at position 8223 (S8223) is a Phosphoserine. Positions 8246–8279 (DSLLSPQPSSNLSLSLAQPLRSERSGRDTPASVD) are disordered. Residues 8247–8265 (SLLSPQPSSNLSLSLAQPL) show a composition bias toward low complexity. Position 8274 is a phosphothreonine (T8274). Phosphoserine occurs at positions 8277, 8280, and 8305. Spectrin repeat units lie at residues 8329–8438 (SALE…MKQN), 8439–8548 (LQKW…LQDA), and 8549–8666 (LMQC…SSSQ). Position 8360 is a phosphothreonine (T8360). The disordered stretch occupies residues 8671–8734 (SWSSADELDT…DSSLSEPGPG (64 aa)). Composition is skewed to polar residues over residues 8680–8696 (TSGSVSPTSGRSTPNRQ) and 8704–8729 (SLSQPGPSVSSPHSRSTKGGSDSSLS). A KASH domain is found at 8738–8797 (RGFLFRVLRAALPLQLLLLLLIGLACLVPMSEEDYSCALSNNFARSFHPMLRYTNGPPPL). A helical; Anchor for type IV membrane protein transmembrane segment spans residues 8747–8767 (AALPLQLLLLLLIGLACLVPM). Topologically, residues 8768–8797 (SEEDYSCALSNNFARSFHPMLRYTNGPPPL) are perinuclear space.

Belongs to the nesprin family. In terms of assembly, core component of LINC complexes which are composed of inner nuclear membrane SUN domain-containing proteins coupled to outer nuclear membrane KASH domain-containing nesprins. SUN and KASH domain-containing proteins seem to bind each other promiscuously; however, differentially expression of LINC complex constituents can give rise to specific assemblies. At least SUN1/2-containing core LINC complexes are proposed to be hexameric composed of three protomers of each KASH and SUN domain-containing protein. The SUN2:SYNE1/KASH1 LINC complex is a heterohexamer; the homotrimeric cloverleave-like conformation of the SUN domain is a prerequisite for LINC complex formation in which three separate SYNE1/KASH1 peptides bind at the interface of adjacent SUN domains. Self-associates. Interacts with SYNE3. Interacts with SPAG4/SUN4. May interact with MUSK. Interacts with F-actin via its N-terminal domain. Interacts with EMD and LMNA in vitro. Interacts (via KASH domain) with TMEM258. Post-translationally, the disulfid bond with SUN1 or SUN2 is required for stability of the respective LINC complex under tensile forces. As to expression, expressed in HeLa, A431, A172 and HaCaT cells (at protein level). Widely expressed. Highly expressed in skeletal and smooth muscles, heart, spleen, peripheral blood leukocytes, pancreas, cerebellum, stomach, kidney and placenta. Isoform GSRP-56 is predominantly expressed in heart and skeletal muscle (at protein level).

It is found in the nucleus outer membrane. Its subcellular location is the nucleus. The protein resides in the nucleus envelope. It localises to the cytoplasm. The protein localises to the cytoskeleton. It is found in the myofibril. Its subcellular location is the sarcomere. The protein resides in the golgi apparatus. Its function is as follows. Multi-isomeric modular protein which forms a linking network between organelles and the actin cytoskeleton to maintain the subcellular spatial organization. As a component of the LINC (LInker of Nucleoskeleton and Cytoskeleton) complex involved in the connection between the nuclear lamina and the cytoskeleton. The nucleocytoplasmic interactions established by the LINC complex play an important role in the transmission of mechanical forces across the nuclear envelope and in nuclear movement and positioning. May be involved in nucleus-centrosome attachment and nuclear migration in neural progenitors implicating LINC complex association with SUN1/2 and probably association with cytoplasmic dynein-dynactin motor complexes; SYNE1 and SYNE2 may act redundantly. Required for centrosome migration to the apical cell surface during early ciliogenesis. May be involved in nuclear remodeling during sperm head formation in spermatogenesis; a probable SUN3:SYNE1/KASH1 LINC complex may tether spermatid nuclei to posterior cytoskeletal structures such as the manchette. In Homo sapiens (Human), this protein is Nesprin-1.